Consider the following 344-residue polypeptide: GTP 3',8-cyclase (344 aa).

Positions 19 to 245 (PFGRAVTYLR…DIPYRTGGPA (227 aa)) constitute a Radical SAM core domain. Residue Arg-28 participates in GTP binding. Positions 35 and 39 each coordinate [4Fe-4S] cluster. Tyr-41 lines the S-adenosyl-L-methionine pocket. Residue Cys-42 participates in [4Fe-4S] cluster binding. Residue Arg-77 coordinates GTP. S-adenosyl-L-methionine is bound at residue Gly-81. Position 111 (Thr-111) interacts with GTP. Ser-135 contacts S-adenosyl-L-methionine. Lys-171 contributes to the GTP binding site. Residue Met-205 coordinates S-adenosyl-L-methionine. [4Fe-4S] cluster-binding residues include Cys-268 and Cys-271. GTP is bound at residue 273 to 275 (RVR). Residue Cys-285 coordinates [4Fe-4S] cluster.

It belongs to the radical SAM superfamily. MoaA family. Monomer and homodimer. Requires [4Fe-4S] cluster as cofactor.

It carries out the reaction GTP + AH2 + S-adenosyl-L-methionine = (8S)-3',8-cyclo-7,8-dihydroguanosine 5'-triphosphate + 5'-deoxyadenosine + L-methionine + A + H(+). The protein operates within cofactor biosynthesis; molybdopterin biosynthesis. In terms of biological role, catalyzes the cyclization of GTP to (8S)-3',8-cyclo-7,8-dihydroguanosine 5'-triphosphate. The protein is GTP 3',8-cyclase of Brucella abortus (strain S19).